Consider the following 273-residue polypeptide: 2,3,4,5-tetrahydropyridine-2,6-dicarboxylate N-succinyltransferase (273 aa).

Positions 104 and 141 each coordinate substrate.

Belongs to the transferase hexapeptide repeat family. In terms of assembly, homotrimer.

Its subcellular location is the cytoplasm. It catalyses the reaction (S)-2,3,4,5-tetrahydrodipicolinate + succinyl-CoA + H2O = (S)-2-succinylamino-6-oxoheptanedioate + CoA. Its pathway is amino-acid biosynthesis; L-lysine biosynthesis via DAP pathway; LL-2,6-diaminopimelate from (S)-tetrahydrodipicolinate (succinylase route): step 1/3. This Aromatoleum aromaticum (strain DSM 19018 / LMG 30748 / EbN1) (Azoarcus sp. (strain EbN1)) protein is 2,3,4,5-tetrahydropyridine-2,6-dicarboxylate N-succinyltransferase.